A 292-amino-acid polypeptide reads, in one-letter code: Bifunctional protein FolD (292 aa).

NADP(+) contacts are provided by residues 169–171 (GRG), Thr196, and Val237.

Belongs to the tetrahydrofolate dehydrogenase/cyclohydrolase family. Homodimer.

The catalysed reaction is (6R)-5,10-methylene-5,6,7,8-tetrahydrofolate + NADP(+) = (6R)-5,10-methenyltetrahydrofolate + NADPH. The enzyme catalyses (6R)-5,10-methenyltetrahydrofolate + H2O = (6R)-10-formyltetrahydrofolate + H(+). It participates in one-carbon metabolism; tetrahydrofolate interconversion. Functionally, catalyzes the oxidation of 5,10-methylenetetrahydrofolate to 5,10-methenyltetrahydrofolate and then the hydrolysis of 5,10-methenyltetrahydrofolate to 10-formyltetrahydrofolate. This is Bifunctional protein FolD from Bifidobacterium longum (strain NCC 2705).